The sequence spans 682 residues: Potassium-transporting ATPase ATP-binding subunit (682 aa).

The next 5 membrane-spanning stretches (helical) occupy residues 15–35, 42–62, 66–86, 233–253, and 257–277; these read AALFDAAVLVAAMRAAFAKLA, SPVMAVVMGGTVLAAVITASG, AGFGWAVTAILFVTVLFGNFA, LTFLIVVASLPAIAGFVGVTL, and LLIALLVCLIPTTIGGLLPAI. The 4-aspartylphosphate intermediate role is filled by aspartate 310. ATP contacts are provided by residues aspartate 347, glutamate 351, 377 to 384, and lysine 395; that span reads FTAQTRMS. Mg(2+) is bound by residues aspartate 518 and aspartate 522. 3 helical membrane passes run 588–608, 616–636, and 662–682; these read FAILPALFAAAIPSMAALNVM, AVLAALIFNALIIPALIPLAL, and VLLPFAAIKAIDLALVAVLGA.

Belongs to the cation transport ATPase (P-type) (TC 3.A.3) family. Type IA subfamily. In terms of assembly, the system is composed of three essential subunits: KdpA, KdpB and KdpC.

It localises to the cell inner membrane. The catalysed reaction is K(+)(out) + ATP + H2O = K(+)(in) + ADP + phosphate + H(+). Part of the high-affinity ATP-driven potassium transport (or Kdp) system, which catalyzes the hydrolysis of ATP coupled with the electrogenic transport of potassium into the cytoplasm. This subunit is responsible for energy coupling to the transport system and for the release of the potassium ions to the cytoplasm. This chain is Potassium-transporting ATPase ATP-binding subunit, found in Xanthomonas axonopodis pv. citri (strain 306).